A 590-amino-acid polypeptide reads, in one-letter code: Protein ecdysoneless homolog (590 aa).

The disordered stretch occupies residues 445–464 (EDFYGVKNSDTDTDSDSLAD). The segment covering 455–464 (TDTDSDSLAD) has biased composition (acidic residues).

It belongs to the ECD family.

It is found in the cytoplasm. Its subcellular location is the nucleus. Involved in the regulation of carbohydrate metabolism. May act as a transcription factor. In Schizosaccharomyces pombe (strain 972 / ATCC 24843) (Fission yeast), this protein is Protein ecdysoneless homolog.